The primary structure comprises 418 residues: Tyrosine--tRNA ligase (418 aa).

Residue Tyr34 coordinates L-tyrosine. The short motif at 39-48 (PTADSLHLGH) is the 'HIGH' region element. L-tyrosine-binding residues include Tyr169 and Gln173. The 'KMSKS' region motif lies at 229-233 (KFGKS). ATP is bound at residue Lys232. Residues 352–418 (NNIVELLVSS…GKKKYFVLTY (67 aa)) enclose the S4 RNA-binding domain.

It belongs to the class-I aminoacyl-tRNA synthetase family. TyrS type 1 subfamily. In terms of assembly, homodimer.

It localises to the cytoplasm. It catalyses the reaction tRNA(Tyr) + L-tyrosine + ATP = L-tyrosyl-tRNA(Tyr) + AMP + diphosphate + H(+). Its function is as follows. Catalyzes the attachment of tyrosine to tRNA(Tyr) in a two-step reaction: tyrosine is first activated by ATP to form Tyr-AMP and then transferred to the acceptor end of tRNA(Tyr). The protein is Tyrosine--tRNA ligase of Streptococcus pneumoniae (strain CGSP14).